The following is a 756-amino-acid chain: Multicystatin (756 aa).

Cystatin domains follow at residues 3–96, 97–191, 192–285, 286–380, 381–474, 475–568, 569–662, and 663–756; these read IVGG…DDST, MPGG…DDIA, KLGG…DDSA, KTGG…DSAK, IIGG…DDSA, and KPGG…DATK. Short sequence motifs (secondary area of contact) lie at residues 48-52, 142-146, 237-241, 331-335, 426-430, 520-524, 614-618, and 708-712; these read QIVAG, QVVAG, QLVSG, and QLVAG.

Belongs to the cystatin family. Phytocystatin subfamily. In terms of tissue distribution, expressed abundantly in tuber and leaf.

Probably has a role in the plant's defense system. The chain is Multicystatin from Solanum tuberosum (Potato).